Reading from the N-terminus, the 450-residue chain is MGHGVSCARTGDEHDFFRAAQLGDLDALAALLAADPSLARRATLYDRLSVLHIAAANGRIEVLSMFLDRGAPPDAVNRHKQTPLMLAAMHGKIDCVLKLLQADANILMFDSVHARTCLHHAAYYGHVDCLQAILAAAQTTPVADSWGFARFVNVRDDHGATPLHLAARQGRPGCVQVLLENGAIVSALTGSYGFPGSTSLHLAARSGNLDCIRKLLAWGADRLQRDSAGRIPYSVALKRNHGACAALLNPTSAEPMVWPSPLKFISELEPEAKALLEAALMEANREREKKILNGTKYSLPSPSPGDDSADDDACSEVSDTELCCICFDQACTIEVQDCGHQMCAPCTLALCCHNKPNPTTLTPPSPACPFCRGSISRLVVAQTRSACDPDKPSSLQLTRKRSRRSHNLSEGSSSFKGLPSAMGSFSKLGRGSSRMADSDSSNLDKPEHDL.

ANK repeat units follow at residues 11–40 (GDEH…SLAR), 46–75 (DRLS…PPDA), 79–108 (HKQT…NILM), 113–142 (HART…TTPV), 158–187 (HGAT…IVSA), and 195–225 (PGST…RLQR). The segment at 291–312 (ILNGTKYSLPSPSPGDDSADDD) is disordered. Residues 323–372 (CCICFDQACTIEVQDCGHQMCAPCTLALCCHNKPNPTTLTPPSPACPFCR) form an RING-type zinc finger. Residues 385–450 (SACDPDKPSS…SNLDKPEHDL (66 aa)) form a disordered region.

Interacts (via ankyrin repeats) with XA21. Phosphorylated by XA21.

The catalysed reaction is S-ubiquitinyl-[E2 ubiquitin-conjugating enzyme]-L-cysteine + [acceptor protein]-L-lysine = [E2 ubiquitin-conjugating enzyme]-L-cysteine + N(6)-ubiquitinyl-[acceptor protein]-L-lysine.. It functions in the pathway protein modification; protein ubiquitination. Its function is as follows. E3 ubiquitin-protein ligase required for full accumulation of the LRR receptor kinase XA21 and XA21-mediated disease resistance. Binding to XA21 may stabilize the receptor kinase and maintain its protein level. Autoubiquitinated in vitro. The protein is E3 ubiquitin-protein ligase XB3 (XB3) of Oryza sativa subsp. japonica (Rice).